Here is a 444-residue protein sequence, read N- to C-terminus: Lycopaoctaene synthase (444 aa).

The NADP(+) site is built by Arg-48 and Arg-73. Mg(2+)-binding residues include Asp-76, Glu-79, and Asp-80. NADP(+)-binding residues include Arg-215, Lys-315, and Arg-317. 2 helical membrane-spanning segments follow: residues Thr-391–Tyr-411 and Gly-415–Phe-435.

It belongs to the phytoene/squalene synthase family. It depends on Mg(2+) as a cofactor.

The protein resides in the membrane. The catalysed reaction is 2 (2E,6E)-farnesyl diphosphate + NADH + H(+) = squalene + 2 diphosphate + NAD(+). It catalyses the reaction 2 (2E,6E)-farnesyl diphosphate + NADPH + H(+) = squalene + 2 diphosphate + NADP(+). The enzyme catalyses 2 (2E,6E,10E)-geranylgeranyl diphosphate + NADPH + H(+) = all-trans-lycopaoctaene + 2 diphosphate + NADP(+). Functionally, converts the C20 geranylgeranyl diphosphate (GGPP) to the C40 lycopaoctaene, the first committed intermediate in the production of lycopadiene. Converts farnesyl diphosphate (FPP) into squalene, a precursor for sterol biosynthesis in eukaryotes. Converts with low efficiency the C20 phytyl diphosphate (PPP) to the C40 lycopadiene in vitro. This reaction may not have biological significance in vivo. This chain is Lycopaoctaene synthase, found in Botryococcus braunii (Green alga).